We begin with the raw amino-acid sequence, 303 residues long: Putative monooxygenase p33MONOX (303 aa).

Disordered stretches follow at residues 1 to 20 (MASRQPEVPALAPSGPLGKM), 37 to 56 (LEDPAPMTPPPSDMGSIPWK), 66 to 96 (HLDKTEEGAASVSSLAVTPSPATDSSDKAPV), 156 to 233 (KLQS…LQKS), and 260 to 283 (RVGEDPATFKPPKMDVPMVEGKKQ). Residue threonine 44 is modified to Phosphothreonine. The Flavin-containing monooxygenase motif motif lies at 67-77 (LDKTEEGAASV). Residues 76-89 (SVSSLAVTPSPATD) are compositionally biased toward polar residues. Residues 170–183 (ASAQSTPSSTPHAS) show a composition bias toward low complexity. Threonine 175 carries the post-translational modification Phosphothreonine. Serine 183 bears the Phosphoserine mark.

Belongs to the P33MONOX family. In terms of assembly, interacts with NELFB, NOL12 and PRNP. As to expression, expressed in neuronal pyramidal cells of the hippocampus and in the neurons of the cortex.

It localises to the cytoplasm. Its function is as follows. Potential NADPH-dependent oxidoreductase. May be involved in the regulation of neuronal survival, differentiation and axonal outgrowth. The polypeptide is Putative monooxygenase p33MONOX (P33monox) (Mus musculus (Mouse)).